Reading from the N-terminus, the 578-residue chain is A-type ATP synthase subunit A (578 aa).

228-235 (GPFGSGKT) provides a ligand contact to ATP.

This sequence belongs to the ATPase alpha/beta chains family. As to quaternary structure, has multiple subunits with at least A(3), B(3), C, D, E, F, H, I and proteolipid K(x).

It localises to the cell membrane. The catalysed reaction is ATP + H2O + 4 H(+)(in) = ADP + phosphate + 5 H(+)(out). Its function is as follows. Component of the A-type ATP synthase that produces ATP from ADP in the presence of a proton gradient across the membrane. The A chain is the catalytic subunit. The protein is A-type ATP synthase subunit A of Methanococcoides burtonii (strain DSM 6242 / NBRC 107633 / OCM 468 / ACE-M).